A 519-amino-acid chain; its full sequence is Steroid 17-alpha-hydroxylase/17,20 lyase (519 aa).

Residue Cys-455 coordinates heme.

The protein belongs to the cytochrome P450 family. It depends on heme as a cofactor.

It localises to the membrane. The enzyme catalyses a C21-steroid + reduced [NADPH--hemoprotein reductase] + O2 = a 17alpha-hydroxy-C21-steroid + oxidized [NADPH--hemoprotein reductase] + H2O + H(+). It catalyses the reaction 17alpha-hydroxyprogesterone + reduced [NADPH--hemoprotein reductase] + O2 = androst-4-ene-3,17-dione + acetate + oxidized [NADPH--hemoprotein reductase] + H2O + 2 H(+). The catalysed reaction is 17alpha-hydroxypregnenolone + reduced [NADPH--hemoprotein reductase] + O2 = 3beta-hydroxyandrost-5-en-17-one + acetate + oxidized [NADPH--hemoprotein reductase] + H2O + 2 H(+). It participates in lipid metabolism; steroid biosynthesis. In terms of biological role, conversion of pregnenolone and progesterone to their 17-alpha-hydroxylated products and subsequently to dehydroepiandrosterone (DHEA) and androstenedione. Catalyzes both the 17-alpha-hydroxylation and the 17,20-lyase reaction. This is Steroid 17-alpha-hydroxylase/17,20 lyase (CYP17A1) from Rana dybowskii (Dybovsky's frog).